The primary structure comprises 152 residues: MERNSLLVCQLLCLVARAAATSTAQTTLPSTVNSTATGVTSDSYQNTTTQLPASSSAAALSLPNASAVQARSPSSFSDTYPTATALCGTLVVVGIVLCLSLASTVRSKELPSDHESLEAWEQGSDVEAPPLPEKSPCPEHVPEIRVEIPRYV.

Residues 1-20 (MERNSLLVCQLLCLVARAAA) form the signal peptide. The disordered stretch occupies residues 26-47 (TTLPSTVNSTATGVTSDSYQNT). A compositionally biased stretch (polar residues) spans 32 to 47 (VNSTATGVTSDSYQNT). The helical transmembrane segment at 85–105 (ALCGTLVVVGIVLCLSLASTV) threads the bilayer. The disordered stretch occupies residues 110-140 (LPSDHESLEAWEQGSDVEAPPLPEKSPCPEH).

It belongs to the HHV-5 UL124 protein family.

The protein localises to the host membrane. This is an uncharacterized protein from Human cytomegalovirus (strain AD169) (HHV-5).